The chain runs to 172 residues: MAKFQAKSQNDAPDDGLKEKMIAINRVTKVVKGGRILGFAALTVVGDGDGRVGMGKGKSKEVPAAVQKAMEEARRNMTKVSLKNGTLHHNVFGHHGAANVMMAPAPKGTGIIAGGPMRAVFEVMGITDIVAKSHGSSNPYNMVRATMDALKNSTTASDIAAKRGKSVEEIFG.

The region spanning 17–80 (LKEKMIAINR…EEARRNMTKV (64 aa)) is the S5 DRBM domain.

Belongs to the universal ribosomal protein uS5 family. Part of the 30S ribosomal subunit. Contacts proteins S4 and S8.

Functionally, with S4 and S12 plays an important role in translational accuracy. In terms of biological role, located at the back of the 30S subunit body where it stabilizes the conformation of the head with respect to the body. The polypeptide is Small ribosomal subunit protein uS5 (Polaromonas naphthalenivorans (strain CJ2)).